Consider the following 239-residue polypeptide: Ribonuclease 3 (239 aa).

Residues 12–137 (RAKLEGLIGH…LIAAIYLDGG (126 aa)) form the RNase III domain. Glutamate 50 serves as a coordination point for Mg(2+). Residue aspartate 54 is part of the active site. Residues aspartate 123 and glutamate 126 each coordinate Mg(2+). The active site involves glutamate 126. The 70-residue stretch at 162 to 231 (DAKTELQEWS…ATKMLEREGI (70 aa)) folds into the DRBM domain.

Belongs to the ribonuclease III family. Homodimer. Requires Mg(2+) as cofactor.

The protein localises to the cytoplasm. The catalysed reaction is Endonucleolytic cleavage to 5'-phosphomonoester.. Digests double-stranded RNA. Involved in the processing of primary rRNA transcript to yield the immediate precursors to the large and small rRNAs (23S and 16S). Processes some mRNAs, and tRNAs when they are encoded in the rRNA operon. Processes pre-crRNA and tracrRNA of type II CRISPR loci if present in the organism. The chain is Ribonuclease 3 from Rhizobium leguminosarum bv. trifolii (strain WSM2304).